The chain runs to 174 residues: Gamma-crystallin A (174 aa).

Beta/gamma crystallin 'Greek key' domains lie at G2–S40 and G41–P83. Residues Y84 to S87 form a connecting peptide region. 2 Beta/gamma crystallin 'Greek key' domains span residues H88–E128 and G129–M171.

Belongs to the beta/gamma-crystallin family.

Crystallins are the dominant structural components of the vertebrate eye lens. The sequence is that of Gamma-crystallin A (Cryga) from Mus musculus (Mouse).